We begin with the raw amino-acid sequence, 362 residues long: Aminomethyltransferase (362 aa).

Belongs to the GcvT family. In terms of assembly, the glycine cleavage system is composed of four proteins: P, T, L and H.

It carries out the reaction N(6)-[(R)-S(8)-aminomethyldihydrolipoyl]-L-lysyl-[protein] + (6S)-5,6,7,8-tetrahydrofolate = N(6)-[(R)-dihydrolipoyl]-L-lysyl-[protein] + (6R)-5,10-methylene-5,6,7,8-tetrahydrofolate + NH4(+). In terms of biological role, the glycine cleavage system catalyzes the degradation of glycine. This is Aminomethyltransferase from Listeria monocytogenes serotype 4b (strain CLIP80459).